We begin with the raw amino-acid sequence, 661 residues long: Heme transporter BhuA (661 aa).

An N-terminal signal peptide occupies residues 1-23; the sequence is MKFTRTLVLASTFLLATVATSQA. In terms of domain architecture, TBDR plug spans 48 to 159; sequence KDNIEATGGT…AAGAIRYETV (112 aa). The region spanning 170–661 is the TBDR beta-barrel domain; it reads TFGARIIGSY…TFTFQTAFKF (492 aa).

It belongs to the TonB-dependent receptor family.

It localises to the cell outer membrane. Heme transporter. This is Heme transporter BhuA (bhuA) from Brucella suis biovar 1 (strain 1330).